Consider the following 232-residue polypeptide: Mitochondrial import inner membrane translocase subunit Tim21 (232 aa).

A mitochondrion-targeting transit peptide spans 1–31 (MLPRFLWRPVLCSYRALGSPSRSLTVSYRNL). Residues 96–116 (FTYFIVVLIGIGVTGGLFYVV) traverse the membrane as a helical segment.

It belongs to the TIM21 family.

The protein localises to the mitochondrion membrane. May participate in the translocation of transit peptide-containing proteins across the mitochondrial inner membrane. This chain is Mitochondrial import inner membrane translocase subunit Tim21 (timm21), found in Xenopus laevis (African clawed frog).